A 285-amino-acid polypeptide reads, in one-letter code: uncharacterized protein (285 aa).

Residue S168 coordinates substrate. The Proton acceptor role is filled by Y181.

This sequence belongs to the short-chain dehydrogenases/reductases (SDR) family.

This is an uncharacterized protein from Haemophilus influenzae (strain ATCC 51907 / DSM 11121 / KW20 / Rd).